The sequence spans 407 residues: Na(+)-translocating NADH-quinone reductase subunit F (407 aa).

Residues 3–23 form a helical membrane-spanning segment; sequence IILGVVMFTLIVLALTVMILF. Residues 32–126 enclose the 2Fe-2S ferredoxin-type domain; the sequence is GDITIDINED…NLKIELPEEI (95 aa). Residues Cys-69, Cys-75, Cys-78, and Cys-110 each contribute to the [2Fe-2S] cluster site. The FAD-binding FR-type domain maps to 129 to 269; that stretch reads VKKWECEVIS…SGPFGEFFAK (141 aa).

This sequence belongs to the NqrF family. In terms of assembly, composed of six subunits; NqrA, NqrB, NqrC, NqrD, NqrE and NqrF. Requires [2Fe-2S] cluster as cofactor. FAD is required as a cofactor.

The protein localises to the cell inner membrane. It carries out the reaction a ubiquinone + n Na(+)(in) + NADH + H(+) = a ubiquinol + n Na(+)(out) + NAD(+). In terms of biological role, NQR complex catalyzes the reduction of ubiquinone-1 to ubiquinol by two successive reactions, coupled with the transport of Na(+) ions from the cytoplasm to the periplasm. The first step is catalyzed by NqrF, which accepts electrons from NADH and reduces ubiquinone-1 to ubisemiquinone by a one-electron transfer pathway. This is Na(+)-translocating NADH-quinone reductase subunit F from Yersinia enterocolitica serotype O:8 / biotype 1B (strain NCTC 13174 / 8081).